Reading from the N-terminus, the 511-residue chain is MALSNTLSLSSSKSLVQSHLLHNPTPQPRFSLFPTTQHGRRHPISAVHAAEPSKTAVKQGKWSLDSWKTKKALQLPEYPDEKELESVLKTLEMNPPLVFAGEARSLEEKLGEAALGKAFLLQGGDCAESFKEFNANNIRDTFRILLQMSVVLMFGGQVPVIKVGRMAGQFAKPRSDPFEEINGVKLPSYKGDNINGDTFDEKSRIPDPHRLIRAYMQSAATLNLLRAFATGGYAAMQRVTEWNLDFVENSEQGDRYQELAHRVDEALGFMAAAGLTVDHPIMSTTDFWTSHECLLLPYEQALTREDSTSGLFYDCSAHMVWVGERTRQLDGAHVEFLRGVANPLGIKVSQKMDPKELIKLIDILNPANKPGRITVIVRMGAENMRVKLSHLVRAVRGAGQIVTWVCDPMHGNTIKAPCGLKTRAFDSIQAEVRAFFDVHEQEGSHPWCIHLEMTGQNVTECIGGSRTVTYDDLGSRYHTHCDPRLNASQSLELSFIVAERLRRRRMSSQRL.

The transit peptide at 1 to 49 (MALSNTLSLSSSKSLVQSHLLHNPTPQPRFSLFPTTQHGRRHPISAVHA) directs the protein to the chloroplast.

This sequence belongs to the class-II DAHP synthase family. As to expression, higher levels seen in the cotyledons than in the leaves and flowers. Lower levels seen in the roots and stems.

Its subcellular location is the plastid. The protein localises to the chloroplast. It carries out the reaction D-erythrose 4-phosphate + phosphoenolpyruvate + H2O = 7-phospho-2-dehydro-3-deoxy-D-arabino-heptonate + phosphate. It functions in the pathway metabolic intermediate biosynthesis; chorismate biosynthesis; chorismate from D-erythrose 4-phosphate and phosphoenolpyruvate: step 1/7. May be involved in the synthesis of secondary metabolites derived from intermediates of the pre-chorismate pathway up to shikimate. The sequence is that of Phospho-2-dehydro-3-deoxyheptonate aldolase 1, chloroplastic from Solanum lycopersicum (Tomato).